The sequence spans 580 residues: Negative elongation factor B (580 aa).

Lysine 519 carries the post-translational modification N6-acetyllysine. The tract at residues 552–580 (DHRKPSPTQAAETPALDLPLPSVPAPATL) is disordered. Serine 557 carries the post-translational modification Phosphoserine.

Belongs to the NELF-B family. The NELF complex is composed of NELFA, NELFB, NELFCD and NELFE; the N-terminus of NELFB binds to the NELFA:NELFCD subcomplex. Binds RNA which may help to stabilize the NELF complex on nucleic acid Interacts with the first BRCT repeat of BRCA1. Interacts with KIAA1191. Isoform 1 and isoform 2 interact with NELFA, NELFCD and NELFE. In terms of tissue distribution, isoform 1 is expressed in the kidney, liver, adipose and lung. Isoform 2 is widely expressed.

It is found in the nucleus. In terms of biological role, essential component of the NELF complex, a complex that negatively regulates the elongation of transcription by RNA polymerase II (Pol II). The NELF complex, which acts via an association with the DSIF complex and causes transcriptional pausing, is counteracted by the P-TEFb kinase complex. May be able to induce chromatin unfolding. Essential for early embryogenesis; plays an important role in maintaining the undifferentiated state of embryonic stem cells (ESCs) by preventing unscheduled expression of developmental genes. Plays a key role in establishing the responsiveness of stem cells to developmental cues; facilitates plasticity and cell fate commitment in ESCs by establishing the appropriate expression level of signaling molecules. Supports the transcription of genes involved in energy metabolism in cardiomyocytes; facilitates the association of transcription initiation factors with the promoters of the metabolism-related genes. The polypeptide is Negative elongation factor B (Nelfb) (Mus musculus (Mouse)).